The following is a 369-amino-acid chain: MSQSLFIGLMSGTSMDGVDAVLVDFDTPSPKLIATHTEAIPEHLFKGLQRLCQPGQDEVNRLGRLDRSVGSLFAKAVNNLLASSGIDKSQVVAIGSHGQTVRHMPNLEVGFTVQIGDPNTIAAETGIDVIADFRRKDIALGGQGAPLVPAFHQQIFAKADKRRVILNIGGIANITWLPGNAEAVLGFDTGPGNTLIDGWIQQVKQQAFDRDGAFAASGKTDNTLLAQLLSHPYFMQPYPKSTGRELFNNAWLEQQLEKFGHLDEADIQSTLLDLTCHSIAADILKLSNSGELFVCGGGALNIELMNRLQALLPGFTLTTTSVLGVDPKWVEAIAFAWLALRHHQGLPANLPAVTGARREAILGARFPAA.

12-19 contacts ATP; sequence GTSMDGVD.

The protein belongs to the anhydro-N-acetylmuramic acid kinase family.

The enzyme catalyses 1,6-anhydro-N-acetyl-beta-muramate + ATP + H2O = N-acetyl-D-muramate 6-phosphate + ADP + H(+). It functions in the pathway amino-sugar metabolism; 1,6-anhydro-N-acetylmuramate degradation. Its pathway is cell wall biogenesis; peptidoglycan recycling. Functionally, catalyzes the specific phosphorylation of 1,6-anhydro-N-acetylmuramic acid (anhMurNAc) with the simultaneous cleavage of the 1,6-anhydro ring, generating MurNAc-6-P. Is required for the utilization of anhMurNAc either imported from the medium or derived from its own cell wall murein, and thus plays a role in cell wall recycling. The sequence is that of Anhydro-N-acetylmuramic acid kinase from Shewanella amazonensis (strain ATCC BAA-1098 / SB2B).